The primary structure comprises 1115 residues: Eukaryotic translation initiation factor 2-alpha kinase 3 (1115 aa).

Residues 1–29 (MERATGPGSLARTLLLPLLLGLVAGTVTA) form the signal peptide. Residues 30–514 (RRTSDLLAPT…PNYKNIRKKD (485 aa)) are Extracellular-facing. Residues 74–101 (SEALPAAAGEQEAREPEPEPEEEPDIRP) form a disordered region. N259 carries N-linked (GlcNAc...) asparagine glycosylation. A helical membrane pass occupies residues 515–535 (PVLLLHWWKEIVGTIVFCIVA). Residues 536 to 1115 (TTFIVRRLFH…SSPHSPLPSN (580 aa)) lie on the Cytoplasmic side of the membrane. The Protein kinase domain maps to 593–1076 (FEPIQCMGRG…AASIIENAIF (484 aa)). 599–607 (MGRGGFGVV) lines the ATP pocket. At Y619 the chain carries Phosphotyrosine; by autocatalysis. K622 lines the ATP pocket. Residues 647 to 887 (EHPGIVRYFN…SPKVYLYIQM (241 aa)) form an insert loop region. At S715 the chain carries Phosphoserine. A Phosphothreonine modification is found at T802. 2 disordered regions span residues 807-832 (VFEDSGCDNASSKEEPRMNQPPVGNH) and 841-860 (RHSGSKSSEPTVSVSPSRPT). The segment covering 845 to 860 (SKSSEPTVSVSPSRPT) has biased composition (polar residues). D936 functions as the Proton acceptor in the catalytic mechanism. A Phosphothreonine modification is found at T981. Positions 1087–1115 (LRQRSRSMSSPGAKHSRHSSSPHSPLPSN) are disordered. Phosphoserine is present on S1093.

This sequence belongs to the protein kinase superfamily. Ser/Thr protein kinase family. GCN2 subfamily. In terms of assembly, forms dimers with HSPA5/BIP in resting cells. Homotetramerizes in response to endoplasmic reticulum (ER) stress, leading to its activation. Interacts with HSP90B1/GRP94. Interacts with DNAJC3; inhibiting EIF2AK3/PERK activity. Interacts with ATAD3A; ATAD3A and EIF2S1/eIF-2-alpha occupy a common binding site within the cytoplasmic loop of EIF2AK3/PERK, leading to prevent EIF2AK3/PERK association with its substrate EIF2S1/eIF-2-alpha. Interacts with MFN2. Interacts with TMEM33. Interacts with PDIA6. Interacts with LACC1. Oligomerization of the N-terminal ER luminal domain by ER stress promotes EIF2AK3/PERK trans-autophosphorylation of the C-terminal cytoplasmic kinase domain at multiple residues including Thr-981 on the kinase activation loop. Autophosphorylated at Tyr-619 following endoplasmic reticulum stress, leading to activate its activity. Dephosphorylated at Tyr-619 by PTPN1/PTP1B, leading to inactivate its enzyme activity. Phosphorylation at Thr-802 by AKT (AKT1, AKT2 and/or AKT3) inactivates EIF2AK3/PERK. Post-translationally, ADP-ribosylated by PARP16 upon ER stress, which increases kinase activity.

It is found in the endoplasmic reticulum membrane. It catalyses the reaction L-seryl-[protein] + ATP = O-phospho-L-seryl-[protein] + ADP + H(+). It carries out the reaction L-threonyl-[protein] + ATP = O-phospho-L-threonyl-[protein] + ADP + H(+). The enzyme catalyses L-tyrosyl-[protein] + ATP = O-phospho-L-tyrosyl-[protein] + ADP + H(+). With respect to regulation, inhibited by HSPA5/BIP in absence of stress. Perturbation in protein folding in the endoplasmic reticulum (ER) promotes reversible dissociation from HSPA5/BIP and oligomerization, resulting in trans-autophosphorylation and kinase activity induction. Inactivated following phosphorylation at Thr-802 by AKT (AKT1, AKT2 and/or AKT3). Inhibited by ATAD3A at mitochondria-endoplasmic reticulum contact sites, providing a safe haven for mitochondrial protein translation during ER stress. Functionally, metabolic-stress sensing protein kinase that phosphorylates the alpha subunit of eukaryotic translation initiation factor 2 (EIF2S1/eIF-2-alpha) in response to various stress, such as unfolded protein response (UPR). Key effector of the integrated stress response (ISR) to unfolded proteins: EIF2AK3/PERK specifically recognizes and binds misfolded proteins, leading to its activation and EIF2S1/eIF-2-alpha phosphorylation. EIF2S1/eIF-2-alpha phosphorylation in response to stress converts EIF2S1/eIF-2-alpha in a global protein synthesis inhibitor, leading to a global attenuation of cap-dependent translation, while concomitantly initiating the preferential translation of ISR-specific mRNAs, such as the transcriptional activators ATF4 and QRICH1, and hence allowing ATF4- and QRICH1-mediated reprogramming. The EIF2AK3/PERK-mediated unfolded protein response increases mitochondrial oxidative phosphorylation by promoting ATF4-mediated expression of COX7A2L/SCAF1, thereby increasing formation of respiratory chain supercomplexes. In contrast to most subcellular compartments, mitochondria are protected from the EIF2AK3/PERK-mediated unfolded protein response due to EIF2AK3/PERK inhibition by ATAD3A at mitochondria-endoplasmic reticulum contact sites. In addition to EIF2S1/eIF-2-alpha, also phosphorylates NFE2L2/NRF2 in response to stress, promoting release of NFE2L2/NRF2 from the BCR(KEAP1) complex, leading to nuclear accumulation and activation of NFE2L2/NRF2. Serves as a critical effector of unfolded protein response (UPR)-induced G1 growth arrest due to the loss of cyclin-D1 (CCND1). Involved in control of mitochondrial morphology and function. This chain is Eukaryotic translation initiation factor 2-alpha kinase 3, found in Bos taurus (Bovine).